The following is a 220-amino-acid chain: Phosphatidylserine decarboxylase proenzyme (220 aa).

Ser-188 functions as the Schiff-base intermediate with substrate; via pyruvic acid in the catalytic mechanism. Ser-188 is subject to Pyruvic acid (Ser); by autocatalysis.

This sequence belongs to the phosphatidylserine decarboxylase family. PSD-A subfamily. As to quaternary structure, heterodimer of a large membrane-associated beta subunit and a small pyruvoyl-containing alpha subunit. Pyruvate is required as a cofactor. In terms of processing, is synthesized initially as an inactive proenzyme. Formation of the active enzyme involves a self-maturation process in which the active site pyruvoyl group is generated from an internal serine residue via an autocatalytic post-translational modification. Two non-identical subunits are generated from the proenzyme in this reaction, and the pyruvate is formed at the N-terminus of the alpha chain, which is derived from the carboxyl end of the proenzyme. The post-translation cleavage follows an unusual pathway, termed non-hydrolytic serinolysis, in which the side chain hydroxyl group of the serine supplies its oxygen atom to form the C-terminus of the beta chain, while the remainder of the serine residue undergoes an oxidative deamination to produce ammonia and the pyruvoyl prosthetic group on the alpha chain.

The protein localises to the cell membrane. It catalyses the reaction a 1,2-diacyl-sn-glycero-3-phospho-L-serine + H(+) = a 1,2-diacyl-sn-glycero-3-phosphoethanolamine + CO2. It functions in the pathway phospholipid metabolism; phosphatidylethanolamine biosynthesis; phosphatidylethanolamine from CDP-diacylglycerol: step 2/2. Catalyzes the formation of phosphatidylethanolamine (PtdEtn) from phosphatidylserine (PtdSer). This Parabacteroides distasonis (strain ATCC 8503 / DSM 20701 / CIP 104284 / JCM 5825 / NCTC 11152) protein is Phosphatidylserine decarboxylase proenzyme.